Consider the following 553-residue polypeptide: Ergothioneine transport permease/ergothioneine binding protein EgtU (553 aa).

The 180-residue stretch at 57–236 folds into the ABC transmembrane type-1 domain; the sequence is LAQHFIIVAL…LFSVLADKFV (180 aa). The next 6 membrane-spanning stretches (helical) occupy residues 61-81, 98-118, 122-142, 182-202, 219-239, and 261-281; these read FIIV…IGVF, FLYT…IGVG, ALLV…YNAL, IAVV…AGGL, VAGS…VSVF, and VYTN…WLIP. Topologically, residues 282-553 are periplasmic; that stretch reads RNAIEEKPLV…AKDFLERLGL (272 aa). The tract at residues 288–549 is ergothioneine binding domain; that stretch reads KPLVVATKPS…PKIVAKDFLE (262 aa).

It in the N-terminal section; belongs to the binding-protein-dependent transport system permease family. The protein in the C-terminal section; belongs to the OsmX family. The complex is composed of two ATP-binding proteins (EgtV) and two transmembrane proteins (EgtU).

The protein localises to the cell inner membrane. Its function is as follows. Part of the ABC transporter complex EgtUV involved in the uptake of ergothioneine (EGT), a natural low-molecular weight (LMW) thiol antioxidant which protects H.pylori against bleach stress. Responsible for the translocation of the substrate across the membrane. Also contains a C-terminal periplasmic solute-binding domain (SBD) which binds to ergothioneine with low-micromolar affinity. Cannot bind the structurally similar compounds glycine betaine, choline, proline, carnitine or histidine. This Helicobacter pylori (strain G27) protein is Ergothioneine transport permease/ergothioneine binding protein EgtU.